The primary structure comprises 96 residues: Co-chaperonin GroES (96 aa).

It belongs to the GroES chaperonin family. In terms of assembly, heptamer of 7 subunits arranged in a ring. Interacts with the chaperonin GroEL.

The protein resides in the cytoplasm. Its function is as follows. Together with the chaperonin GroEL, plays an essential role in assisting protein folding. The GroEL-GroES system forms a nano-cage that allows encapsulation of the non-native substrate proteins and provides a physical environment optimized to promote and accelerate protein folding. GroES binds to the apical surface of the GroEL ring, thereby capping the opening of the GroEL channel. The polypeptide is Co-chaperonin GroES (Polaromonas naphthalenivorans (strain CJ2)).